The primary structure comprises 1209 residues: Inner capsid protein VP2 (1209 aa).

Basic and acidic residues-rich tracts occupy residues methionine 1–glutamate 17 and alanine 26–serine 53. The tract at residues methionine 1–serine 53 is disordered.

Belongs to the turreted BTV-fold inner capsid family. As to quaternary structure, homodecamer; each decamer is made up of two conformers of VP2, called VP2A and VP2B. 12 homodecamers assemble to form an icosahedral capsid.

Its subcellular location is the virion. In terms of biological role, inner capsid protein that self-assembles to form an icosahedral capsid with a T=2 symmetry, which consists of 120 copies of VP2, with channels at each of its five-fold vertices. This capsid constitutes the innermost concentric layer of the viral mature particle. The polypeptide is Inner capsid protein VP2 (Callospermophilus lateralis (Golden-mantled ground squirrel)).